We begin with the raw amino-acid sequence, 296 residues long: Ribosomal protein L11 methyltransferase (296 aa).

Residues T145, G166, D188, and N230 each contribute to the S-adenosyl-L-methionine site.

Belongs to the methyltransferase superfamily. PrmA family.

It is found in the cytoplasm. The enzyme catalyses L-lysyl-[protein] + 3 S-adenosyl-L-methionine = N(6),N(6),N(6)-trimethyl-L-lysyl-[protein] + 3 S-adenosyl-L-homocysteine + 3 H(+). Methylates ribosomal protein L11. The chain is Ribosomal protein L11 methyltransferase from Histophilus somni (strain 2336) (Haemophilus somnus).